The following is an 84-amino-acid chain: MATGTDQVVGFGLVAVSLIIFTYYTTWVILLPFIDSQHVIHKYFLPRAYAVLIPLATGLLLLLFVGLFITYVMLKSRRLTKKAQ.

Helical transmembrane passes span 11–31 and 49–69; these read FGLV…VILL and YAVL…GLFI.

The protein belongs to the DPM2 family. Component of the dolichol-phosphate mannose (DPM) synthase complex composed of DPM1, DPM2 and DPM3; in the complex interacts directly with DPM3. Component of the glycosylphosphatidylinositol-N-acetylglucosaminyltransferase (GPI-GnT) complex composed at least by PIGA, PIGC, PIGH, PIGP, PIGQ, PIGY and DPM2. Interacts with PIGA, PIGC and PIGQ.

Its subcellular location is the endoplasmic reticulum membrane. The protein operates within protein modification; protein glycosylation. Its function is as follows. Regulates the biosynthesis of dolichol phosphate-mannose. Regulatory subunit of the dolichol-phosphate mannose (DPM) synthase complex; essential for the ER localization and stable expression of DPM1. Part of the glycosylphosphatidylinositol-N-acetylglucosaminyltransferase (GPI-GnT) complex that catalyzes the transfer of N-acetylglucosamine from UDP-N-acetylglucosamine to phosphatidylinositol and participates in the first step of GPI biosynthesis. May act by regulating the GPI-GNT complex. The protein is Dolichol phosphate-mannose biosynthesis regulatory protein of Cricetulus griseus (Chinese hamster).